The following is a 235-amino-acid chain: uncharacterized protein (235 aa).

The interval 37–235 is disordered; that stretch reads QNAKLNDGDN…GGEDYPWPWN (199 aa). Acidic residues predominate over residues 72-89; the sequence is GSDDYSDVEDGGAEEGDS. A compositionally biased stretch (low complexity) spans 112–124; sequence TSSTSTASTSSGS. Basic and acidic residues predominate over residues 152–170; sequence RRPELDLSPKIENRSDSSS. Positions 185–202 are enriched in polar residues; sequence NKDNPSRGQGNENPSASD.

This sequence belongs to the herpesviridae BKRF4 family.

This is an uncharacterized protein from Alcelaphine herpesvirus 1 (strain C500) (AlHV-1).